The chain runs to 102 residues: Small ribosomal subunit protein uS10 (102 aa).

The protein belongs to the universal ribosomal protein uS10 family. In terms of assembly, part of the 30S ribosomal subunit.

Its function is as follows. Involved in the binding of tRNA to the ribosomes. The sequence is that of Small ribosomal subunit protein uS10 from Oenococcus oeni (strain ATCC BAA-331 / PSU-1).